The primary structure comprises 414 residues: Histidine--tRNA ligase (414 aa).

It belongs to the class-II aminoacyl-tRNA synthetase family. Homodimer.

It is found in the cytoplasm. The catalysed reaction is tRNA(His) + L-histidine + ATP = L-histidyl-tRNA(His) + AMP + diphosphate + H(+). In Anaeromyxobacter dehalogenans (strain 2CP-1 / ATCC BAA-258), this protein is Histidine--tRNA ligase.